Here is a 502-residue protein sequence, read N- to C-terminus: Glutamate--tRNA ligase (502 aa).

Residues 12–22 carry the 'HIGH' region motif; it reads PSPTGYLHVGG. The 'KMSKS' region motif lies at 259–263; it reads KLSKR. ATP is bound at residue lysine 262.

This sequence belongs to the class-I aminoacyl-tRNA synthetase family. Glutamate--tRNA ligase type 1 subfamily. As to quaternary structure, monomer.

Its subcellular location is the cytoplasm. It catalyses the reaction tRNA(Glu) + L-glutamate + ATP = L-glutamyl-tRNA(Glu) + AMP + diphosphate. Its function is as follows. Catalyzes the attachment of glutamate to tRNA(Glu) in a two-step reaction: glutamate is first activated by ATP to form Glu-AMP and then transferred to the acceptor end of tRNA(Glu). This Chlorobium phaeobacteroides (strain DSM 266 / SMG 266 / 2430) protein is Glutamate--tRNA ligase.